Reading from the N-terminus, the 290-residue chain is NAD kinase (290 aa).

Aspartate 75 acts as the Proton acceptor in catalysis. Residues 75 to 76 (DG), 148 to 149 (NE), aspartate 178, 189 to 194 (TAYNIS), and glutamine 247 contribute to the NAD(+) site.

This sequence belongs to the NAD kinase family. A divalent metal cation is required as a cofactor.

It is found in the cytoplasm. The enzyme catalyses NAD(+) + ATP = ADP + NADP(+) + H(+). Functionally, involved in the regulation of the intracellular balance of NAD and NADP, and is a key enzyme in the biosynthesis of NADP. Catalyzes specifically the phosphorylation on 2'-hydroxyl of the adenosine moiety of NAD to yield NADP. The chain is NAD kinase from Wolinella succinogenes (strain ATCC 29543 / DSM 1740 / CCUG 13145 / JCM 31913 / LMG 7466 / NCTC 11488 / FDC 602W) (Vibrio succinogenes).